Reading from the N-terminus, the 1499-residue chain is DNA-directed RNA polymerase subunit beta' (1499 aa).

Zn(2+) is bound by residues Cys-67, Cys-69, Cys-82, and Cys-85. Residues Asp-497, Asp-499, and Asp-501 each contribute to the Mg(2+) site. 4 residues coordinate Zn(2+): Cys-865, Cys-940, Cys-947, and Cys-950. The tract at residues 1475-1499 is disordered; it reads YEPSQRAYQEDEYAKKEDGEIAIDD. Basic and acidic residues predominate over residues 1482 to 1493; sequence YQEDEYAKKEDG.

This sequence belongs to the RNA polymerase beta' chain family. As to quaternary structure, the RNAP catalytic core consists of 2 alpha, 1 beta, 1 beta' and 1 omega subunit. When a sigma factor is associated with the core the holoenzyme is formed, which can initiate transcription. Mg(2+) is required as a cofactor. The cofactor is Zn(2+).

The enzyme catalyses RNA(n) + a ribonucleoside 5'-triphosphate = RNA(n+1) + diphosphate. Its function is as follows. DNA-dependent RNA polymerase catalyzes the transcription of DNA into RNA using the four ribonucleoside triphosphates as substrates. The protein is DNA-directed RNA polymerase subunit beta' of Chloroherpeton thalassium (strain ATCC 35110 / GB-78).